We begin with the raw amino-acid sequence, 118 residues long: Large ribosomal subunit protein bL19 (118 aa).

The protein belongs to the bacterial ribosomal protein bL19 family.

In terms of biological role, this protein is located at the 30S-50S ribosomal subunit interface and may play a role in the structure and function of the aminoacyl-tRNA binding site. The polypeptide is Large ribosomal subunit protein bL19 (Lactiplantibacillus plantarum (strain ATCC BAA-793 / NCIMB 8826 / WCFS1) (Lactobacillus plantarum)).